Consider the following 116-residue polypeptide: Small ribosomal subunit protein bS16 (116 aa).

Residues 88-116 form a disordered region; it reads RNNPKAAVPGKRMAELAKKKAERAAASAE. The span at 99 to 110 shows a compositional bias: basic and acidic residues; the sequence is RMAELAKKKAER.

Belongs to the bacterial ribosomal protein bS16 family.

This chain is Small ribosomal subunit protein bS16, found in Cereibacter sphaeroides (strain ATCC 17025 / ATH 2.4.3) (Rhodobacter sphaeroides).